The sequence spans 444 residues: Ribulose bisphosphate carboxylase (444 aa).

Residue Lys163 is the Proton acceptor of the active site. A substrate-binding site is contributed by Lys165. Mg(2+)-binding residues include Lys189, Asp191, and Glu192. Lys189 is subject to N6-carboxylysine. His281 serves as the catalytic Proton acceptor. Substrate-binding positions include Arg282, His314, 367–369 (SGG), and 389–392 (QLGG).

This sequence belongs to the RuBisCO large chain family. Type III subfamily. As to quaternary structure, homodecamer, consisting of five dimer units which form a ring-like pentagonal structure. This arrangement is essential for its high thermostability. In contrast to form I RuBisCO, the form III RuBisCO is composed solely of large subunits. Mg(2+) is required as a cofactor.

The enzyme catalyses 2 (2R)-3-phosphoglycerate + 2 H(+) = D-ribulose 1,5-bisphosphate + CO2 + H2O. It catalyses the reaction D-ribulose 1,5-bisphosphate + O2 = 2-phosphoglycolate + (2R)-3-phosphoglycerate + 2 H(+). In terms of biological role, catalyzes the addition of molecular CO(2) and H(2)O to ribulose 1,5-bisphosphate (RuBP), generating two molecules of 3-phosphoglycerate (3-PGA). Functions in an archaeal AMP degradation pathway, together with AMP phosphorylase and R15P isomerase. The sequence is that of Ribulose bisphosphate carboxylase from Thermococcus kodakarensis (strain ATCC BAA-918 / JCM 12380 / KOD1) (Pyrococcus kodakaraensis (strain KOD1)).